The following is a 554-amino-acid chain: ATP-dependent RNA helicase MRH4, mitochondrial (554 aa).

A mitochondrion-targeting transit peptide spans 1–54; sequence MSSVGIASASLWLRGPVKSALKGRWLSCEQMRRYGTKSAPAVRKGGHSKKARQA. Residues 119 to 140 carry the Q motif motif; it reads DCGLDDKRVAAFLGQVQPTPIQ. A Helicase ATP-binding domain is found at 150–337; sequence TLMEPQLQVH…NKLFPNLQVV (188 aa). 163–170 contributes to the ATP binding site; that stretch reads AETGSGKT. Positions 285–288 match the DEAD box motif; it reads DEAD. The Helicase C-terminal domain occupies 368–554; sequence ALAQALYAIM…PVVKKNRPIQ (187 aa). The interval 439 to 474 is disordered; the sequence is RIQDQVRPSELKKPQERRLPNSNIKVADSKDNGQRS. The span at 445 to 457 shows a compositional bias: basic and acidic residues; sequence RPSELKKPQERRL.

The protein belongs to the DEAD box helicase family. MRH4 subfamily.

The protein resides in the mitochondrion. The catalysed reaction is ATP + H2O = ADP + phosphate + H(+). Functionally, ATP-binding RNA helicase involved in mitochondrial RNA metabolism. Required for maintenance of mitochondrial DNA. In Eremothecium gossypii (strain ATCC 10895 / CBS 109.51 / FGSC 9923 / NRRL Y-1056) (Yeast), this protein is ATP-dependent RNA helicase MRH4, mitochondrial (MRH4).